The primary structure comprises 172 residues: MAGSVADSDAVVKLDDGHLNNSLSSPVQADVYFPRLIVPFCGHIKGGMRPGKKVLVMGIVDLNPESFAISLTCGDSEDPPADVAIELKAVFTDRQLLRNSCISGERGEEQSAIPYFPFIPDQPFRVEILCEHPRFRVFVDGHQLFDFYHRIQTLSAIDTIKINGDLQITKLG.

Ala-2 bears the N-acetylalanine mark. Phosphoserine occurs at positions 22 and 25. The Galectin domain occupies Pro-39–Ile-168.

Monomer.

In terms of biological role, does not bind lactose, and may not bind carbohydrates. This chain is Galectin-related protein (LGALSL), found in Homo sapiens (Human).